A 140-amino-acid polypeptide reads, in one-letter code: MTFQTLSSENNELLTIASESFLKRWAFSEQRLTVDLMTSDDDELTVYIETDLVQSSPIYLNEDLNICRLSIQDMHEILAVQHGYYVPPSRFGDLMKYSSECYSFFYGRKSDFKYLASFIGYEKYIACPIRFLEDISWRIR.

Its function is as follows. Putative immunity protein component of a toxin-immunity protein module, which may function as a cellular contact-dependent growth inhibition (CDI) system. Blocks the toxic effects of expression of the C-terminus (residues 1519-1658) of cognate toxin RhsC in E.coli. The polypeptide is Immunity protein RhsIC (rhsIC) (Dickeya dadantii (strain 3937) (Erwinia chrysanthemi (strain 3937))).